A 292-amino-acid chain; its full sequence is Bifunctional protein FolD 2 (292 aa).

NADP(+) contacts are provided by residues 166-168 (GHS) and I232.

Belongs to the tetrahydrofolate dehydrogenase/cyclohydrolase family. In terms of assembly, homodimer.

It catalyses the reaction (6R)-5,10-methylene-5,6,7,8-tetrahydrofolate + NADP(+) = (6R)-5,10-methenyltetrahydrofolate + NADPH. It carries out the reaction (6R)-5,10-methenyltetrahydrofolate + H2O = (6R)-10-formyltetrahydrofolate + H(+). The protein operates within one-carbon metabolism; tetrahydrofolate interconversion. Functionally, catalyzes the oxidation of 5,10-methylenetetrahydrofolate to 5,10-methenyltetrahydrofolate and then the hydrolysis of 5,10-methenyltetrahydrofolate to 10-formyltetrahydrofolate. The sequence is that of Bifunctional protein FolD 2 from Ruegeria pomeroyi (strain ATCC 700808 / DSM 15171 / DSS-3) (Silicibacter pomeroyi).